The primary structure comprises 822 residues: Dimethyl sulfoxide/trimethylamine N-oxide reductase (822 aa).

Positions 1–42 (MTKLSGQELHAELSRRAFLSYTAAVGALGLCGTSLLAQGARA) form a signal peptide, tat-type signal. Mo-bis(molybdopterin guanine dinucleotide) is bound by residues Trp-158, 158–160 (WKS), Ser-189, 232–233 (KT), 262–263 (IN), 283–285 (QTD), 364–365 (WS), Arg-368, Asn-476, His-480, 500–501 (QD), Arg-523, Asp-553, 683–686 (ASHP), Arg-689, 691–693 (HSQ), Asn-779, and 796–797 (GQ).

It belongs to the prokaryotic molybdopterin-containing oxidoreductase family. As to quaternary structure, homodimer. Requires Mo-bis(molybdopterin guanine dinucleotide) as cofactor. Predicted to be exported by the Tat system. The position of the signal peptide cleavage has been experimentally proven.

It localises to the periplasm. It catalyses the reaction dimethyl sulfide + a menaquinone + H2O = dimethyl sulfoxide + a menaquinol. It carries out the reaction trimethylamine + 2 Fe(III)-[cytochrome c] + H2O = trimethylamine N-oxide + 2 Fe(II)-[cytochrome c] + 3 H(+). Its function is as follows. Catalyzes the reduction of dimethyl sulfoxide (DMSO) and trimethylamine N-oxide (TMAO) to dimethyl sulfide (DMS) and trimethylamine, respectively. The terminal DMSO reductase can also use various sulfoxides and N-oxide compounds as terminal electron acceptor in addition to DMSO and TMAO. The polypeptide is Dimethyl sulfoxide/trimethylamine N-oxide reductase (dmsA) (Cereibacter sphaeroides (Rhodobacter sphaeroides)).